Consider the following 107-residue polypeptide: uncharacterized protein (107 aa).

The span at 1–14 shows a compositional bias: polar residues; sequence MTERNASGRMNTKG. Residues 1-20 are disordered; sequence MTERNASGRMNTKGRSIKET.

It is found in the mitochondrion. This is an uncharacterized protein from Arabidopsis thaliana (Mouse-ear cress).